The following is a 364-amino-acid chain: Probable endopolygalacturonase B (364 aa).

The first 20 residues, 1–20 (MHFFQSSLVAATMGAALVAA), serve as a signal peptide directing secretion. A propeptide spanning residues 21–29 (APAADLETR) is cleaved from the precursor. Cys32 and Cys47 are disulfide-bonded. 2 N-linked (GlcNAc...) asparagine glycosylation sites follow: Asn138 and Asn141. 6 PbH1 repeats span residues 159-188 (SDHL…DVGS), 189-210 (STYI…AVNS), 211-231 (GEHI…SIGS), 240-261 (VNDV…RIKT), 269-291 (VTGV…VVQQ), and 303-324 (TNGV…TSSA). The Proton donor role is filled by Asp203. Cys205 and Cys221 are joined by a disulfide. His225 is an active-site residue. Cys331 and Cys336 are disulfide-bonded. N-linked (GlcNAc...) asparagine glycosylation occurs at Asn338. Cysteines 355 and 364 form a disulfide.

The protein belongs to the glycosyl hydrolase 28 family.

The protein localises to the secreted. The enzyme catalyses (1,4-alpha-D-galacturonosyl)n+m + H2O = (1,4-alpha-D-galacturonosyl)n + (1,4-alpha-D-galacturonosyl)m.. In terms of biological role, involved in maceration and soft-rotting of plant tissue. Hydrolyzes the 1,4-alpha glycosidic bonds of de-esterified pectate in the smooth region of the plant cell wall. The sequence is that of Probable endopolygalacturonase B (pgaB) from Aspergillus fumigatus (strain CBS 144.89 / FGSC A1163 / CEA10) (Neosartorya fumigata).